The following is a 377-amino-acid chain: ATP-dependent (S)-NAD(P)H-hydrate dehydratase (377 aa).

The region spanning 10–366 is the YjeF C-terminal domain; sequence LLHLSRQLIQ…EYLHESFTEL (357 aa). (6S)-NADPHX-binding positions include G148 and 201–207; that span reads NVVEFQR. Residues 245–249 and 264–273 contribute to the ATP site; these read KGEHD and GSNKRVGGQG. D274 contributes to the (6S)-NADPHX binding site.

This sequence belongs to the NnrD/CARKD family. Mg(2+) is required as a cofactor.

Its subcellular location is the cytoplasm. The enzyme catalyses (6S)-NADHX + ATP = ADP + phosphate + NADH + H(+). It carries out the reaction (6S)-NADPHX + ATP = ADP + phosphate + NADPH + H(+). In terms of biological role, catalyzes the dehydration of the S-form of NAD(P)HX at the expense of ATP, which is converted to ADP. Together with NAD(P)HX epimerase, which catalyzes the epimerization of the S- and R-forms, the enzyme allows the repair of both epimers of NAD(P)HX, a damaged form of NAD(P)H that is a result of enzymatic or heat-dependent hydration. The chain is ATP-dependent (S)-NAD(P)H-hydrate dehydratase from Candida albicans (strain SC5314 / ATCC MYA-2876) (Yeast).